We begin with the raw amino-acid sequence, 502 residues long: UDP-N-acetylmuramoylalanine--D-glutamate ligase (502 aa).

129–135 (GTNGKTT) is an ATP binding site.

Belongs to the MurCDEF family.

It is found in the cytoplasm. It catalyses the reaction UDP-N-acetyl-alpha-D-muramoyl-L-alanine + D-glutamate + ATP = UDP-N-acetyl-alpha-D-muramoyl-L-alanyl-D-glutamate + ADP + phosphate + H(+). Its pathway is cell wall biogenesis; peptidoglycan biosynthesis. In terms of biological role, cell wall formation. Catalyzes the addition of glutamate to the nucleotide precursor UDP-N-acetylmuramoyl-L-alanine (UMA). The sequence is that of UDP-N-acetylmuramoylalanine--D-glutamate ligase from Burkholderia ambifaria (strain MC40-6).